Consider the following 442-residue polypeptide: Protein trichome birefringence-like 26 (442 aa).

A helical; Signal-anchor for type II membrane protein membrane pass occupies residues 51-71 (FFLYFSLVALAYYFIISSLAV). The GDS motif signature appears at 164–166 (GDS). Residues 409–423 (DCLHWCLPGPIDSWN) carry the DCXHWCLPGXXDXWN motif motif.

It belongs to the PC-esterase family. TBL subfamily.

It is found in the membrane. Its function is as follows. May be involved in the O-acetylation of mannan. May act as a bridging protein that binds pectin and other cell wall polysaccharides. Probably involved in maintaining esterification of pectins. This chain is Protein trichome birefringence-like 26 (TBL26), found in Arabidopsis thaliana (Mouse-ear cress).